The chain runs to 539 residues: Probable transcription factor GLK2 (539 aa).

A disordered region spans residues 86-218 (FASSPDDEPP…NSHGKRKVKV (133 aa)). Low complexity-rich tracts occupy residues 99–111 (SAPGPGEPAAAAG) and 121–130 (AAAAAAAAAA). Basic and acidic residues predominate over residues 144-161 (KKDDEERSSSLPEEKDAK). In terms of domain architecture, HTH myb-type spans 212–271 (GKRKVKVDWTPELHRRFVQAVEQLGIDKAVPSRILELMGIECLTRHNIASHLQKYRSHRK). The segment at residues 242 to 267 (PSRILELMGIECLTRHNIASHLQKYR) is a DNA-binding region (H-T-H motif).

As to expression, expressed in leaves.

Its subcellular location is the nucleus. Functionally, probable transcriptional activator that promotes chloroplast development. Acts as an activator of nuclear photosynthetic genes involved in chlorophyll biosynthesis, light harvesting, and electron transport. The polypeptide is Probable transcription factor GLK2 (GLK2) (Oryza sativa subsp. japonica (Rice)).